The following is a 253-amino-acid chain: Major prion protein (253 aa).

Residues 1–22 (MANLGCWMLVLFVATWSDLGLC) form the signal peptide. The interaction with GRB2, ERI3 and SYN1 stretch occupies residues 23 to 230 (KKRPKPGGWN…ESQAYYQRGS (208 aa)). The segment at 26 to 108 (PKPGGWNTGG…WNKPSKPKTN (83 aa)) is disordered. Repeat copies occupy residues 51–59 (PQGGGGWGQ), 60–67 (PHGGGWGQ), 68–75 (PHGGGWGQ), 76–83 (PHGGGWGQ), and 84–91 (PHGGGWGQ). The tract at residues 51–91 (PQGGGGWGQPHGGGWGQPHGGGWGQPHGGGWGQPHGGGWGQ) is 5 X 8 AA tandem repeats of P-H-G-G-G-W-G-Q. The segment covering 52–95 (QGGGGWGQPHGGGWGQPHGGGWGQPHGGGWGQPHGGGWGQGGGT) has biased composition (gly residues). Cu(2+) contacts are provided by histidine 61, glycine 62, glycine 63, histidine 69, glycine 70, glycine 71, histidine 77, glycine 78, glycine 79, histidine 85, glycine 86, and glycine 87. A disulfide bridge links cysteine 179 with cysteine 214. Asparagine 181 and asparagine 197 each carry an N-linked (GlcNAc...) asparagine glycan. Serine 230 is lipidated: GPI-anchor amidated serine. Positions 231 to 253 (SMVLFSSPPVILLISFLIFLIVG) are cleaved as a propeptide — removed in mature form.

Belongs to the prion family. In terms of assembly, monomer and homodimer. Has a tendency to aggregate into amyloid fibrils containing a cross-beta spine, formed by a steric zipper of superposed beta-strands. Soluble oligomers may represent an intermediate stage on the path to fibril formation. Copper binding may promote oligomerization. Interacts with GRB2, APP, ERI3/PRNPIP and SYN1. Mislocalized cytosolically exposed PrP interacts with MGRN1; this interaction alters MGRN1 subcellular location and causes lysosomal enlargement. Interacts with KIAA1191.

The protein resides in the cell membrane. It localises to the golgi apparatus. Its primary physiological function is unclear. Has cytoprotective activity against internal or environmental stresses. May play a role in neuronal development and synaptic plasticity. May be required for neuronal myelin sheath maintenance. May play a role in iron uptake and iron homeostasis. Soluble oligomers are toxic to cultured neuroblastoma cells and induce apoptosis (in vitro). Association with GPC1 (via its heparan sulfate chains) targets PRNP to lipid rafts. Also provides Cu(2+) or Zn(2+) for the ascorbate-mediated GPC1 deaminase degradation of its heparan sulfate side chains. The sequence is that of Major prion protein (PRNP) from Hylobates lar (Lar gibbon).